The sequence spans 218 residues: Pyridoxal phosphate homeostasis protein (218 aa).

K25 carries the N6-(pyridoxal phosphate)lysine modification.

Belongs to the pyridoxal phosphate-binding protein YggS/PROSC family.

Pyridoxal 5'-phosphate (PLP)-binding protein, which is involved in PLP homeostasis. The polypeptide is Pyridoxal phosphate homeostasis protein (Synechocystis sp. (strain ATCC 27184 / PCC 6803 / Kazusa)).